The chain runs to 53 residues: Large ribosomal subunit protein eL24 (53 aa).

Residues C4, C7, C30, and C34 each coordinate Zn(2+). Residues 4–34 (CSFCNKEIEEGTGKMYVKKDGSIYFFCSSKC) form a C4-type zinc finger.

This sequence belongs to the eukaryotic ribosomal protein eL24 family. As to quaternary structure, part of the 50S ribosomal subunit. Forms a cluster with proteins L3 and L14. Zn(2+) is required as a cofactor.

Its function is as follows. Binds to the 23S rRNA. This Methanobrevibacter smithii (strain ATCC 35061 / DSM 861 / OCM 144 / PS) protein is Large ribosomal subunit protein eL24.